A 702-amino-acid chain; its full sequence is Penicillin-binding protein activator LpoA (702 aa).

A signal peptide spans 1–26 (MVPSTFLRSKPARCLPVLLATLIFAG). Cys27 carries the N-palmitoyl cysteine lipid modification. Cys27 carries S-diacylglycerol cysteine lipidation. Residues 327–378 (GSRADPVQAPTQDQAAPAAEPAAQAPATSTTPQTTASPATQPVTAPAAQPQP) form a disordered region. The span at 330-378 (ADPVQAPTQDQAAPAAEPAAQAPATSTTPQTTASPATQPVTAPAAQPQP) shows a compositional bias: low complexity.

The protein belongs to the LpoA family. In terms of assembly, interacts with PBP1a.

The protein resides in the cell outer membrane. Its function is as follows. Regulator of peptidoglycan synthesis that is essential for the function of penicillin-binding protein 1A (PBP1a). This Klebsiella pneumoniae subsp. pneumoniae (strain ATCC 700721 / MGH 78578) protein is Penicillin-binding protein activator LpoA.